The chain runs to 95 residues: MAPQTSNLWILLLLVVVMMMSQGCCQHWSYGLSPGGKRDLDSLSDTLGNIIERFPHVDSPCSVLGCVEEPHVPRMYRMKGFIGSERDIGHRMYKK.

The signal sequence occupies residues Met1–Cys25. Gln26 carries the post-translational modification Pyrrolidone carboxylic acid. Glycine amide is present on Gly35.

The protein belongs to the GnRH family.

The protein resides in the secreted. In terms of biological role, stimulates the secretion of gonadotropins. The sequence is that of Progonadoliberin-1 (gnrh1) from Sparus aurata (Gilthead sea bream).